Consider the following 671-residue polypeptide: Leucine zipper putative tumor suppressor 2 (671 aa).

2 disordered regions span residues 1–131 (MAIV…IPVS) and 149–324 (KPVL…SDEA). The interval 1–333 (MAIVHTLPVP…ALLHCVLEGK (333 aa)) is required for centrosomal localization. Residues 187 to 199 (ASSSSSSSSSSAA) show a composition bias toward low complexity. The segment covering 213–241 (PSGTLSDSGRNSLSSLPTYSTGGAEPTTN) has biased composition (polar residues). A compositionally biased stretch (low complexity) spans 242–283 (SPGGHLPSHGPGRGALPGPARGVPTGPSHSDSGRSSSSKSTG). The residue at position 249 (S249) is a Phosphoserine. The segment covering 284-295 (SLGGRVAGGLLG) has biased composition (gly residues). A Phosphoserine modification is found at S296. Residues 296–310 (SGARASPGSSSGGDR) show a composition bias toward low complexity. Over residues 311–321 (SPPPPPPPPPS) the composition is skewed to pro residues. Residues 329–651 (VLEGKLRDRE…LELEARELAD (323 aa)) are a coiled coil. The interval 449 to 671 (SGEISLLKQQ…CLEEITATEI (223 aa)) is sufficient for interaction with CTNNB1. A sufficient for interaction with KATNB1 and for inhibition of katanin-mediated microtubule severing region spans residues 452–671 (ISLLKQQLKE…CLEEITATEI (220 aa)). S572 is subject to Phosphoserine. A Nuclear export signal motif is present at residues 633–642 (LEQELQQLSL).

It belongs to the LZTS2 family. In terms of assembly, interacts with KATNB1. Also interacts with CTNNB1, gamma-tubulin and KIF23.

Its subcellular location is the cytoplasm. The protein localises to the cytoskeleton. It is found in the microtubule organizing center. It localises to the centrosome. Functionally, negative regulator of katanin-mediated microtubule severing and release from the centrosome. Required for central spindle formation and the completion of cytokinesis. May negatively regulate axonal outgrowth by preventing the formation of microtubule bundles that are necessary for transport within the elongating axon. Negative regulator of the Wnt signaling pathway. Represses beta-catenin-mediated transcriptional activation by promoting the nuclear exclusion of beta-catenin. The protein is Leucine zipper putative tumor suppressor 2 (Lzts2) of Mus musculus (Mouse).